Reading from the N-terminus, the 1025-residue chain is Complement receptor type 2 (1025 aa).

Residues 1–11 form the signal peptide; sequence MLTWFLFYFSE. The region spanning 12-75 is the Sushi 1 domain; that stretch reads ISCDPPPEVK…WDKAPPICES (64 aa). Over 12–963 the chain is Extracellular; sequence ISCDPPPEVK…PLALCKYRRW (952 aa). Cystine bridges form between Cys14-Cys56 and Cys42-Cys73. 2 N-linked (GlcNAc...) asparagine glycosylation sites follow: Asn77 and Asn113. 14 Sushi domains span residues 80-140, 144-204, 205-265, 266-336, 341-400, 401-460, 461-516, 517-587, 592-651, 652-706, 707-771, 776-835, 839-899, and 900-960; these read ISCS…VCES, LECP…TCKE, AQCE…VCKE, ILCP…YCVL, VLCL…VCEK, GCQA…QCTV, AECK…LCKE, ITCP…LCKL, VQCT…LCKK, EGCE…VCTV, ILCQ…QCLQ, THCP…TCIR, LGCQ…FCKE, and VNCS…LCKY. 26 disulfide bridges follow: Cys82/Cys124, Cys110/Cys138, Cys146/Cys189, Cys175/Cys202, Cys207/Cys248, Cys234/Cys263, Cys268/Cys317, Cys297/Cys334, Cys343/Cys385, Cys371/Cys398, Cys402/Cys445, Cys431/Cys458, Cys463/Cys501, Cys487/Cys514, Cys519/Cys568, Cys548/Cys585, Cys594/Cys636, Cys622/Cys649, Cys654/Cys689, Cys675/Cys704, Cys709/Cys752, Cys738/Cys769, Cys778/Cys820, Cys806/Cys833, Cys841/Cys884, and Cys870/Cys897. N-linked (GlcNAc...) asparagine glycosylation is found at Asn276, Asn316, Asn364, and Asn380. Asn484 carries an N-linked (GlcNAc...) asparagine glycan. An N-linked (GlcNAc...) asparagine glycan is attached at Asn527. Residues Asn615 and Asn639 are each glycosylated (N-linked (GlcNAc...) asparagine). N-linked (GlcNAc...) asparagine glycosylation occurs at Asn694. Residues Asn754, Asn790, Asn813, Asn823, and Asn851 are each glycosylated (N-linked (GlcNAc...) asparagine). N-linked (GlcNAc...) asparagine glycosylation occurs at Asn901. Disulfide bonds link Cys902/Cys945 and Cys931/Cys958. Residues 964-990 form a helical membrane-spanning segment; sequence STIPLICGISVGSALIILMSVGFCMIL. Over 991-1025 the chain is Cytoplasmic; the sequence is KHRESNYYTKTRPKEGALHLETREVYSIDPYNPAS.

The protein belongs to the receptors of complement activation (RCA) family. Interacts (via Sushi domain 1 and 2) with C3. Interacts with CD19. Part of a complex composed of CD19, CR2/CD21, CD81 and IFITM1/CD225 in the membrane of mature B-cells. Interacts (via Sushi domain 1 and 2) with FCER2 (via the C-terminus). Interacts with CD23. Interacts with FCRL5. Interacts with CR1. Interacts with INFNA1. B-lymphocytes.

It is found in the cell membrane. Functionally, serves as a receptor for various ligands including complement component CD3d, HNRNPU OR IFNA1. When C3d is bound to antigens, attaches to C3d on B-cell surface and thereby facilitates the recognition and uptake of antigens by B-cells. This interaction enhances B-cell activation and subsequent immune responses. Forms a complex with several partners on the surface of B-cells including CD19, FCRL5 and CD81, to form the B-cell coreceptor complex that plays a crucial role in B-cell activation and signaling. Also induces specific intracellular signaling separately from the BCR and CD19 by activating the tyrosine kinase SRC, which then phosphorylates nucleolin/NCL and triggers AKT and GSK3 kinase activities in a SYK/CD19-independent manner. Acts as a ligand for CD23 (FcepsilonRII), a low-affinity receptor for IgE, which is expressed on B-cells and other immune cells, and thus participates in the regulation of IgE production. This chain is Complement receptor type 2 (Cr2), found in Mus musculus (Mouse).